Here is a 359-residue protein sequence, read N- to C-terminus: Peptide chain release factor 1 (359 aa).

Q236 carries the post-translational modification N5-methylglutamine.

It belongs to the prokaryotic/mitochondrial release factor family. In terms of processing, methylated by PrmC. Methylation increases the termination efficiency of RF1.

It localises to the cytoplasm. In terms of biological role, peptide chain release factor 1 directs the termination of translation in response to the peptide chain termination codons UAG and UAA. In Ureaplasma parvum serovar 3 (strain ATCC 27815 / 27 / NCTC 11736), this protein is Peptide chain release factor 1.